The following is a 420-amino-acid chain: Exodeoxyribonuclease 7 large subunit (420 aa).

This sequence belongs to the XseA family. As to quaternary structure, heterooligomer composed of large and small subunits.

Its subcellular location is the cytoplasm. It carries out the reaction Exonucleolytic cleavage in either 5'- to 3'- or 3'- to 5'-direction to yield nucleoside 5'-phosphates.. Functionally, bidirectionally degrades single-stranded DNA into large acid-insoluble oligonucleotides, which are then degraded further into small acid-soluble oligonucleotides. This is Exodeoxyribonuclease 7 large subunit from Helicobacter pylori (strain G27).